The following is a 249-amino-acid chain: MIT domain-containing protein 1 (249 aa).

The region spanning 8 to 86 is the MIT domain; the sequence is QDSDSTAAVA…KYLDQEKEDG (79 aa). Positions 168-231 are important for association with membranes; sequence SGLEEIKQSL…SLGYYDLDLR (64 aa).

In terms of assembly, homodimer. Interacts (via MIT domain) with CHMP1A, CHMP1B, CHMP2A and IST1.

The protein localises to the late endosome membrane. It localises to the midbody. The protein resides in the membrane. Functionally, required for efficient abscission at the end of cytokinesis, together with components of the ESCRT-III complex. The sequence is that of MIT domain-containing protein 1 (Mitd1) from Mus musculus (Mouse).